The chain runs to 442 residues: UDP-N-acetylmuramoylalanine--D-glutamate ligase (442 aa).

109–115 contacts ATP; that stretch reads GSNGKTT.

The protein belongs to the MurCDEF family.

It localises to the cytoplasm. It carries out the reaction UDP-N-acetyl-alpha-D-muramoyl-L-alanine + D-glutamate + ATP = UDP-N-acetyl-alpha-D-muramoyl-L-alanyl-D-glutamate + ADP + phosphate + H(+). Its pathway is cell wall biogenesis; peptidoglycan biosynthesis. Its function is as follows. Cell wall formation. Catalyzes the addition of glutamate to the nucleotide precursor UDP-N-acetylmuramoyl-L-alanine (UMA). The protein is UDP-N-acetylmuramoylalanine--D-glutamate ligase of Solibacter usitatus (strain Ellin6076).